The following is a 325-amino-acid chain: Aldo-keto reductase family 1 member A1 (325 aa).

Residue alanine 2 is modified to N-acetylalanine. Serine 4 is modified (phosphoserine). NADP(+)-binding positions include 11–20, threonine 21, tryptophan 22, and aspartate 45; that span reads GQKMPLIGLG. The Proton donor role is filled by tyrosine 50. Lysine 127 carries the N6-acetyllysine; alternate modification. Lysine 127 is subject to N6-succinyllysine; alternate. Lysine 145 bears the N6-succinyllysine mark. Residues serine 162, asparagine 163, serine 211, leucine 213, serine 215, serine 216, lysine 263, serine 264, valine 265, threonine 266, arginine 269, glutamine 272, and asparagine 273 each contribute to the NADP(+) site. At serine 211 the chain carries Phosphoserine.

It belongs to the aldo/keto reductase family. As to quaternary structure, monomer.

Its subcellular location is the cytoplasm. The protein localises to the cytosol. It is found in the apical cell membrane. The enzyme catalyses a primary alcohol + NADP(+) = an aldehyde + NADPH + H(+). It catalyses the reaction glycerol + NADP(+) = D-glyceraldehyde + NADPH + H(+). It carries out the reaction glycerol + NADP(+) = L-glyceraldehyde + NADPH + H(+). The catalysed reaction is L-gulonate + NADP(+) = aldehydo-D-glucuronate + NADPH + H(+). The enzyme catalyses L-gulono-1,4-lactone + NADP(+) = D-glucurono-3,6-lactone + NADPH + H(+). It catalyses the reaction allyl alcohol + NADP(+) = acrolein + NADPH + H(+). It carries out the reaction hydroxyacetone + NADP(+) = methylglyoxal + NADPH + H(+). The catalysed reaction is 3-deoxyfructose + NADP(+) = 3-deoxyglucosone + NADPH + H(+). The enzyme catalyses (R)-mevalonate + NADP(+) = (R)-mevaldate + NADPH + H(+). It catalyses the reaction pyridine 3-methanol + NADP(+) = pyridine-3-carbaldehyde + NADPH + H(+). It carries out the reaction S-nitroso-CoA + NADPH + H(+) = sulfinamide-CoA + NADP(+). The catalysed reaction is S-nitrosoglutathione + NADPH + H(+) = S-(hydroxysulfenamide)glutathione + NADP(+). Functionally, catalyzes the NADPH-dependent reduction of a wide variety of carbonyl-containing compounds to their corresponding alcohols. Displays enzymatic activity towards endogenous metabolites such as aromatic and aliphatic aldehydes, ketones, monosaccharides and bile acids, with a preference for negatively charged substrates, such as glucuronate and succinic semialdehyde. Plays an important role in ascorbic acid biosynthesis by catalyzing the reduction of D-glucuronic acid and D-glucurono-gamma-lactone. Functions as a detoxifiying enzyme by reducing a range of toxic aldehydes. Reduces methylglyoxal and 3-deoxyglucosone, which are present at elevated levels under hyperglycemic conditions and are cytotoxic. Involved also in the detoxification of lipid-derived aldehydes like acrolein. Plays a role in the activation of procarcinogens, such as polycyclic aromatic hydrocarbon trans-dihydrodiols, and in the metabolism of various xenobiotics and drugs. Also acts as an inhibitor of protein S-nitrosylation by mediating degradation of S-nitroso-coenzyme A (S-nitroso-CoA), a cofactor required to S-nitrosylate proteins. S-nitroso-CoA reductase activity is involved in reprogramming intermediary metabolism in renal proximal tubules, notably by inhibiting protein S-nitrosylation of isoform 2 of PKM (PKM2). Also acts as a S-nitroso-glutathione reductase by catalyzing the NADPH-dependent reduction of S-nitrosoglutathione. Displays no reductase activity towards retinoids. This Sus scrofa (Pig) protein is Aldo-keto reductase family 1 member A1 (AKR1A1).